The following is a 329-amino-acid chain: Peroxidase 73 (329 aa).

Positions 1 to 25 (MARFSLVVVVTLSLAISMFPDTTTA) are cleaved as a signal peptide. Cystine bridges form between C36–C119, C69–C74, C125–C325, and C204–C236. The Proton acceptor role is filled by H67. Ca(2+) contacts are provided by D68, V71, G73, D75, and S77. Substrate is bound at residue P167. A heme b-binding site is contributed by H197. T198 provides a ligand contact to Ca(2+). An N-linked (GlcNAc...) asparagine glycan is attached at N215. Ca(2+) is bound by residues D249, T252, and D257.

Belongs to the peroxidase family. Classical plant (class III) peroxidase subfamily. Requires heme b as cofactor. It depends on Ca(2+) as a cofactor. Expressed in the whole plant, with the highest expression in roots.

It is found in the secreted. It carries out the reaction 2 a phenolic donor + H2O2 = 2 a phenolic radical donor + 2 H2O. Removal of H(2)O(2), oxidation of toxic reductants, biosynthesis and degradation of lignin, suberization, auxin catabolism, response to environmental stresses such as wounding, pathogen attack and oxidative stress. These functions might be dependent on each isozyme/isoform in each plant tissue. The chain is Peroxidase 73 (PER73) from Arabidopsis thaliana (Mouse-ear cress).